The chain runs to 1037 residues: Receptor kinase-like protein Xa21 (1037 aa).

Positions 1 to 24 (MARSPTSVMISSLLLLLLIGPASS) are cleaved as a signal peptide. The Extracellular segment spans residues 25-665 (DDAAAAAAAR…LLENRKHFPV (641 aa)). N-linked (GlcNAc...) asparagine glycosylation is found at Asn66, Asn101, and Asn112. LRR repeat units follow at residues 89–112 (PHRVVKLLLRSSNLSGIISPSLGN), 113–137 (LSFLRELDLSDNYLSGEIPPELSRL), 138–161 (SRLQLLELSGNSIQGSIPAAIGAC), 163–185 (KLTSLDLSHNQLRGMIPREIGAS), 187–210 (KHLSNLYLHTNGLSGEIPSALGNL), 211–234 (TSLQYFDLSCNRLSGAIPSSLGQL), 236–259 (SSLLTMNLRQNNLSGMIPNSIWNL), 260–283 (SSLRAFSVSENKLGGMIPTNAFKT), 285–308 (HLLEVIDMGTNRFYGKIPASVANA), 310–331 (HLTQLQIDGNLFSGIITSGFGR), and 333–355 (RNLTTLYLWRNLFQTREQEDWGF). Asn209 carries an N-linked (GlcNAc...) asparagine glycan. Asn247 and Asn258 each carry an N-linked (GlcNAc...) asparagine glycan. An N-linked (GlcNAc...) asparagine glycan is attached at Asn307. Asn334, Asn361, and Asn385 each carry an N-linked (GlcNAc...) asparagine glycan. 11 LRR repeats span residues 362–385 (CSKLQTLDLGENNLGGVLPNSFSN), 387–411 (STSLSFLALDLNKITGSIPKDIGNL), 412–435 (IGLQHLYLCNNNFRGSLPSSLGRL), 437–459 (NLGILVAYENNLSGSIPLAIGNL), 460–482 (TELNILLLGTNKFSGWIPYTLSN), 483–507 (LTNLLSLGLSTNNLSGPIPSELFNI), 509–532 (TLSIMINVSKNNLEGSIPQEIGHL), 533–556 (KNLVEFHAESNRLSGKIPNTLGDC), 557–580 (QLLRYLYLQNNLLSGSIPSALGQL), 581–604 (KGLETLDLSSNNLSGQIPTSLADI), and 606–629 (MLHSLNLSFNSFMGEVPTIGAFAD). Asn447, Asn458, Asn482, Asn495, and Asn515 each carry an N-linked (GlcNAc...) asparagine glycan. Asn592 and Asn611 each carry an N-linked (GlcNAc...) asparagine glycan. A helical membrane pass occupies residues 666–686 (LPISVSLVAALAILSSLYLLI). Residues 687–1037 (TWHKRTKKGA…PVCEGASLEF (351 aa)) lie on the Cytoplasmic side of the membrane. Residues 689-694 (HKRTKK) carry the Nuclear localization signal motif. The residue at position 698 (Ser698) is a Phosphoserine. Thr700 is modified (phosphothreonine). Ser701 carries the phosphoserine modification. At Thr717 the chain carries Phosphothreonine. The Protein kinase domain occupies 720 to 1019 (FAPTNLLGSG…GDIIDELNAI (300 aa)). Residues 726–734 (LGSGSFGSV) and Lys748 each bind ATP. Asp854 acts as the Proton acceptor in catalysis.

It belongs to the protein kinase superfamily. Ser/Thr protein kinase family. In terms of assembly, interacts with WRKY62/XB10 in the nucleus. Interacts with SERK2. Mn(2+) serves as cofactor. Requires Mg(2+) as cofactor. In terms of processing, undergoes protein cleavage upon X.oryzae pv. oryzae protein Ax21 detection, thus releasing the processed protein kinase Xa21 chain. Autophosphorylated on serine and threonine residues; these phosphorylation prevents proteolytic degradation.

Its subcellular location is the cell membrane. It is found in the endoplasmic reticulum membrane. It localises to the nucleus. It carries out the reaction L-seryl-[protein] + ATP = O-phospho-L-seryl-[protein] + ADP + H(+). The catalysed reaction is L-threonyl-[protein] + ATP = O-phospho-L-threonyl-[protein] + ADP + H(+). Its function is as follows. Receptor kinase that detects X.oryzae pv. oryzae protein Ax21 to promote innate immunity. Following X.oryzae pv. oryzae protein Ax21 detection, undergoes cleavage, releasing the processed protein kinase Xa21 chain. The processed protein kinase Xa21 chain released by protein cleavage after X.oryzae pv. oryzae protein Ax21 detection translocates into the nucleus where it can bind and regulate WRKY62, a transcription factor. Confers resistance to the bacterial pathogen X.oryzae pv. oryzae (Xoo). The sequence is that of Receptor kinase-like protein Xa21 from Oryza sativa subsp. japonica (Rice).